Here is a 328-residue protein sequence, read N- to C-terminus: ATP synthase mitochondrial F1 complex assembly factor 1 (328 aa).

Residues M1–E57 constitute a mitochondrion transit peptide.

This sequence belongs to the ATP11 family. Interacts with ATP5F1B; involved in the assembly of the F1 component of the mitochondrial ATP synthase (ATPase). As to expression, weakly expressed in muscle.

It localises to the mitochondrion inner membrane. In terms of biological role, has a complex stabilizing activity in the assembly of the mitochondrial F1-F0 complex. In Homo sapiens (Human), this protein is ATP synthase mitochondrial F1 complex assembly factor 1.